Consider the following 156-residue polypeptide: Snaclec A4 (156 aa).

The signal sequence occupies residues 1–23; sequence MGRSISVSFGLLVVFLSLSGTGA. C27 and C38 are oxidised to a cystine. Residues 34–155 enclose the C-type lectin domain; that stretch reads HEGHCYKVFN…CGQPYRFTCE (122 aa). N-linked (GlcNAc...) asparagine glycosylation occurs at N45. Disulfide bonds link C55/C154 and C129/C146.

It belongs to the snaclec family. Heterodimer; disulfide-linked. As to expression, expressed by the venom gland.

Its subcellular location is the secreted. In terms of biological role, interferes with one step of hemostasis (modulation of platelet aggregation, or coagulation cascade, for example). This Macrovipera lebetinus (Levantine viper) protein is Snaclec A4.